The chain runs to 1475 residues: Sterol 3-beta-glucosyltransferase (1475 aa).

2 disordered regions span residues 1–73 (MPPP…PPMF) and 94–218 (HDRF…EDDK). Residues 8–17 (LPLHGPAGAA) are compositionally biased toward low complexity. Residues 30 to 40 (RVGKKLQKKRH) are compositionally biased toward basic residues. Residues 108-118 (GPQRDSADRSH) show a composition bias toward basic and acidic residues. Over residues 156 to 168 (EKHKRKISGHKLL) the composition is skewed to basic residues. In terms of domain architecture, GRAM 1 spans 270 to 315 (QDIFEFDQPEAVIEEYPCWLLQSVLLQGYMYITAKHICFYSYLPKK). In terms of domain architecture, PH spans 318–413 (EVVKSGYLSK…WVKSLQRVIF (96 aa)). Disordered regions lie at residues 492–541 (ARLK…TTNK), 594–636 (SSPR…MEEP), and 653–715 (QILR…PVTP). Residues 505–531 (QQQQQQHPMQPPMQASARSSMSGSRRA) are compositionally biased toward low complexity. 2 stretches are compositionally biased toward polar residues: residues 621-634 (QQGS…SSME) and 653-674 (QILR…SASR). Residues 675-686 (TEVEKQQRRDPR) are compositionally biased toward basic and acidic residues. Residues 798-901 (RFRAHFALPE…RDDCAVTLLQ (104 aa)) form the GRAM 2 domain. Residues S989, R990, D992, A1293, H1295, H1308, S1311, G1312, T1313, D1332, and Q1333 each coordinate UDP-alpha-D-glucose. Residues 1413–1475 (IQVEPDEDEE…RVSPSQQSVA (63 aa)) form a disordered region. Residues 1416–1425 (EPDEDEESAE) show a composition bias toward acidic residues.

It belongs to the glycosyltransferase 28 family.

It localises to the cytoplasm. The protein localises to the preautophagosomal structure membrane. It carries out the reaction a sterol + UDP-alpha-D-glucose = a sterol 3-beta-D-glucoside + UDP + H(+). The catalysed reaction is ergosterol + UDP-alpha-D-glucose = ergosteryl 3-beta-D-glucoside + UDP + H(+). In terms of biological role, sterol glycosyltransferase responsible for the glycosylation of ergosterol to form ergosterol-glucoside. Mediates autophagic degradation of peroxisomes (pexophagy) and is involved in pathogenesis via peroxisome degradation inside appressoria that are developing into the host invasion stage. The chain is Sterol 3-beta-glucosyltransferase from Glomerella lagenarium (Anthracnose fungus).